We begin with the raw amino-acid sequence, 229 residues long: Elongation factor 1-delta 1 (229 aa).

The interval 80 to 109 is disordered; it reads ESTAVPSASTPDVADAKAPAADDDDDDDVD. Residues 100–109 show a composition bias toward acidic residues; it reads ADDDDDDDVD.

The protein belongs to the EF-1-beta/EF-1-delta family. In terms of assembly, EF-1 is composed of 4 subunits: alpha, beta (1B-alpha=beta'), delta (1B-beta), and gamma (1B-gamma).

Functionally, EF-1-beta and EF-1-beta' stimulate the exchange of GDP bound to EF-1-alpha to GTP. This chain is Elongation factor 1-delta 1, found in Oryza sativa subsp. japonica (Rice).